A 333-amino-acid polypeptide reads, in one-letter code: L-lactate dehydrogenase A chain (333 aa).

NAD(+) contacts are provided by residues 30–58 and Arg-100; that span reads GAVG…IEDK. The substrate site is built by Arg-107, Asn-139, and Arg-170. Asn-139 is a binding site for NAD(+). Catalysis depends on His-194, which acts as the Proton acceptor. Substrate is bound at residue Thr-249.

This sequence belongs to the LDH/MDH superfamily. LDH family. In terms of assembly, homotetramer.

It is found in the cytoplasm. It catalyses the reaction (S)-lactate + NAD(+) = pyruvate + NADH + H(+). It functions in the pathway fermentation; pyruvate fermentation to lactate; (S)-lactate from pyruvate: step 1/1. Its function is as follows. Interconverts simultaneously and stereospecifically pyruvate and lactate with concomitant interconversion of NADH and NAD(+). In Ambystoma mexicanum (Axolotl), this protein is L-lactate dehydrogenase A chain (LDHA).